The following is a 938-amino-acid chain: Isoleucine--tRNA ligase (938 aa).

The 'HIGH' region signature appears at 58–68 (PYANGSIHIGH). Residue glutamate 561 participates in L-isoleucyl-5'-AMP binding. Positions 602–606 (KMSKS) match the 'KMSKS' region motif. Lysine 605 contributes to the ATP binding site. Cysteine 901, cysteine 904, cysteine 921, and cysteine 924 together coordinate Zn(2+).

It belongs to the class-I aminoacyl-tRNA synthetase family. IleS type 1 subfamily. Monomer. Zn(2+) serves as cofactor.

Its subcellular location is the cytoplasm. It carries out the reaction tRNA(Ile) + L-isoleucine + ATP = L-isoleucyl-tRNA(Ile) + AMP + diphosphate. Its function is as follows. Catalyzes the attachment of isoleucine to tRNA(Ile). As IleRS can inadvertently accommodate and process structurally similar amino acids such as valine, to avoid such errors it has two additional distinct tRNA(Ile)-dependent editing activities. One activity is designated as 'pretransfer' editing and involves the hydrolysis of activated Val-AMP. The other activity is designated 'posttransfer' editing and involves deacylation of mischarged Val-tRNA(Ile). The polypeptide is Isoleucine--tRNA ligase (Serratia proteamaculans (strain 568)).